Consider the following 351-residue polypeptide: Autophagy protein 5 (351 aa).

The disordered stretch occupies residues 106-143 (KSLSSPGSEREHYVRGGTRENISESGAEGEKDDNHGHD). The span at 113–143 (SEREHYVRGGTRENISESGAEGEKDDNHGHD) shows a compositional bias: basic and acidic residues. Lys186 participates in a covalent cross-link: Glycyl lysine isopeptide (Lys-Gly) (interchain with G-Cter in ATG12).

The protein belongs to the ATG5 family. In terms of assembly, conjugated with ATG12. Post-translationally, conjugated to ATG12; which is essential for autophagy.

It is found in the preautophagosomal structure membrane. Its function is as follows. Involved in cytoplasm to vacuole transport (Cvt) and autophagic vesicle formation. Autophagy is essential for maintenance of amino acid levels and protein synthesis under nitrogen starvation. Required for selective autophagic degradation of the nucleus (nucleophagy). Also required for mitophagy, which eliminates defective or superfluous mitochondria in order to fulfill cellular energy requirements and prevent excess ROS production. Conjugation with ATG12, through a ubiquitin-like conjugating system involving ATG7 as an E1-like activating enzyme and ATG10 as an E2-like conjugating enzyme, is essential for its function. The ATG12-ATG5 conjugate acts as an E3-like enzyme which is required for lipidation of ATG8 and ATG8 association to the vesicle membranes. In Coccidioides immitis (strain RS) (Valley fever fungus), this protein is Autophagy protein 5 (ATG5).